The following is a 151-amino-acid chain: Ribosome maturation factor RimP (151 aa).

The protein belongs to the RimP family.

It localises to the cytoplasm. In terms of biological role, required for maturation of 30S ribosomal subunits. This chain is Ribosome maturation factor RimP, found in Photobacterium profundum (strain SS9).